The following is a 928-amino-acid chain: G-protein coupled receptor family C group 6 member A (928 aa).

A signal peptide spans 1–20; it reads MALSFVFITCFMILLDTSQS. Topologically, residues 21–594 are extracellular; sequence CHTPDDFVAI…EYLDWDDSLA (574 aa). Residues Asn-332 and Asn-555 are each glycosylated (N-linked (GlcNAc...) asparagine). Residues 595–615 traverse the membrane as a helical segment; that stretch reads LLLIALSLLGIAFVLAVGIIF. Residues 616 to 630 are Cytoplasmic-facing; sequence TRNLKTPVVKSSGGL. A helical membrane pass occupies residues 631–651; the sequence is VVCYVMLACHALNFASTGFFI. Residues 652 to 669 lie on the Extracellular side of the membrane; it reads GEPQDFTCKTRQTLFGVS. A helical membrane pass occupies residues 670-690; the sequence is FTLCVSCILTKSLKILLAFSF. Residues 691–706 are Cytoplasmic-facing; it reads DPTLKTFLKCLYRPVP. A helical transmembrane segment spans residues 707–727; the sequence is IVLTCTGIQVVICTLWLVLAA. At 728 to 750 the chain is on the extracellular side; it reads PTVEENTSLPRVIILECEEGSAL. The helical transmembrane segment at 751–771 threads the bilayer; sequence AFGTMLGYIAVLAFICFVFAF. Residues 772 to 784 lie on the Cytoplasmic side of the membrane; it reads KGRKLPENYNEAK. A helical transmembrane segment spans residues 785 to 805; it reads FLTFGMLIYFIAWITFIPVYA. The Extracellular portion of the chain corresponds to 806 to 812; sequence TTFGKYL. The chain crosses the membrane as a helical span at residues 813-833; that stretch reads PAVEIIVILISNYGILCCTFF. At 834-928 the chain is on the cytoplasmic side; sequence PKCYIILCKQ…TLHQKRSSSI (95 aa).

It belongs to the G-protein coupled receptor 3 family. As to quaternary structure, homodimer; disulfide-linked. Post-translationally, N-glycosylated. High expression in soft palate. Weak expression in kidney, liver, lung and brain. No expression detected in heart, testis, skeletal muscle amd spleen.

The protein resides in the cell membrane. Functionally, receptor activated by multiple ligands, including osteocalcin (BGLAP), basic amino acids, and various cations. Activated by amino acids with a preference for basic amino acids such as L-Lys, L-Arg and L-ornithine but also by small and polar amino acids. The L-alpha amino acids respond is augmented by divalent cations Ca(2+) and Mg(2+). Seems to act through a G(q)/G(11) and G(i)-coupled pathway. Regulates testosterone production by acting as a ligand for uncarboxylated osteocalcin hormone: osteocalcin-binding at the surface of Leydig cells initiates a signaling response that promotes the expression of enzymes required for testosterone synthesis in a CREB-dependent manner. Mediates the non-genomic effects of androgens in multiple tissue. May coordinate nutritional and hormonal anabolic signals through the sensing of extracellular amino acids, osteocalcin, divalent ions and its responsiveness to anabolic steroids. The sequence is that of G-protein coupled receptor family C group 6 member A (Gprc6a) from Rattus norvegicus (Rat).